We begin with the raw amino-acid sequence, 978 residues long: Glycine dehydrogenase (decarboxylating) (978 aa).

An N6-(pyridoxal phosphate)lysine modification is found at K726.

The protein belongs to the GcvP family. As to quaternary structure, the glycine cleavage system is composed of four proteins: P, T, L and H. Pyridoxal 5'-phosphate serves as cofactor.

It carries out the reaction N(6)-[(R)-lipoyl]-L-lysyl-[glycine-cleavage complex H protein] + glycine + H(+) = N(6)-[(R)-S(8)-aminomethyldihydrolipoyl]-L-lysyl-[glycine-cleavage complex H protein] + CO2. Its function is as follows. The glycine cleavage system catalyzes the degradation of glycine. The P protein binds the alpha-amino group of glycine through its pyridoxal phosphate cofactor; CO(2) is released and the remaining methylamine moiety is then transferred to the lipoamide cofactor of the H protein. The chain is Glycine dehydrogenase (decarboxylating) from Paraburkholderia xenovorans (strain LB400).